The sequence spans 936 residues: Protein NLP2 (936 aa).

Residues 99 to 130 form a disordered region; it reads IMSVNPTEAEKTGKSSGELGSDDGAHQGSSMV. Residues 550 to 635 enclose the RWP-RK domain; the sequence is QPSSIGHAEK…INSVHGVDRS (86 aa). Disordered regions lie at residues 666–697, 753–782, and 794–827; these read PSVG…SCQL, CTNP…IQQE, and DKDH…RSAL. The segment covering 671–682 has biased composition (basic and acidic residues); the sequence is TVEENSDLKSEE. Over residues 688-697 the composition is skewed to polar residues; that stretch reads DGSQRQSCQL. The segment covering 754–769 has biased composition (low complexity); sequence TNPSSSLRPSSESTRN. Over residues 770 to 781 the composition is skewed to polar residues; sequence QIVGRNSPSIQQ. The segment covering 801-815 has biased composition (low complexity); sequence STSGMTDSSSGSASS. A compositionally biased stretch (polar residues) spans 816-825; it reads HPTFKQNTRS. Positions 834–916 constitute a PB1 domain; the sequence is ALTVKATYNG…RIVKLQVRDL (83 aa).

The protein localises to the nucleus. Probable transcription factor. This Oryza sativa subsp. japonica (Rice) protein is Protein NLP2.